We begin with the raw amino-acid sequence, 305 residues long: Ornithine carbamoyltransferase (305 aa).

Residues 52 to 55, Q79, R103, and 130 to 133 each bind carbamoyl phosphate; these read STRT and HPLQ. Residues N162, D224, and 228–229 contribute to the L-ornithine site; that span reads SM. Carbamoyl phosphate is bound by residues 264–265 and R292; that span reads CL.

It belongs to the aspartate/ornithine carbamoyltransferase superfamily. OTCase family.

Its subcellular location is the cytoplasm. The catalysed reaction is carbamoyl phosphate + L-ornithine = L-citrulline + phosphate + H(+). It functions in the pathway amino-acid biosynthesis; L-arginine biosynthesis; L-arginine from L-ornithine and carbamoyl phosphate: step 1/3. In terms of biological role, reversibly catalyzes the transfer of the carbamoyl group from carbamoyl phosphate (CP) to the N(epsilon) atom of ornithine (ORN) to produce L-citrulline. This chain is Ornithine carbamoyltransferase, found in Pyrobaculum aerophilum (strain ATCC 51768 / DSM 7523 / JCM 9630 / CIP 104966 / NBRC 100827 / IM2).